Here is a 463-residue protein sequence, read N- to C-terminus: 23S rRNA (uracil(1939)-C(5))-methyltransferase RlmD (463 aa).

The TRAM domain maps to 6–76 (KSRKPQQPEY…KRLEEAEMVA (71 aa)). 4 residues coordinate [4Fe-4S] cluster: cysteine 90, cysteine 96, cysteine 99, and cysteine 178. Residues glutamine 288, phenylalanine 317, asparagine 322, glutamate 341, aspartate 368, and aspartate 389 each contribute to the S-adenosyl-L-methionine site. Catalysis depends on cysteine 415, which acts as the Nucleophile.

It belongs to the class I-like SAM-binding methyltransferase superfamily. RNA M5U methyltransferase family. RlmD subfamily.

The catalysed reaction is uridine(1939) in 23S rRNA + S-adenosyl-L-methionine = 5-methyluridine(1939) in 23S rRNA + S-adenosyl-L-homocysteine + H(+). Its function is as follows. Catalyzes the formation of 5-methyl-uridine at position 1939 (m5U1939) in 23S rRNA. The sequence is that of 23S rRNA (uracil(1939)-C(5))-methyltransferase RlmD from Acinetobacter baumannii (strain ACICU).